A 258-amino-acid polypeptide reads, in one-letter code: Acyl-[acyl-carrier-protein]--UDP-N-acetylglucosamine O-acyltransferase (258 aa).

The protein belongs to the transferase hexapeptide repeat family. LpxA subfamily. Homotrimer.

The protein resides in the cytoplasm. The enzyme catalyses a (3R)-hydroxyacyl-[ACP] + UDP-N-acetyl-alpha-D-glucosamine = a UDP-3-O-[(3R)-3-hydroxyacyl]-N-acetyl-alpha-D-glucosamine + holo-[ACP]. It functions in the pathway glycolipid biosynthesis; lipid IV(A) biosynthesis; lipid IV(A) from (3R)-3-hydroxytetradecanoyl-[acyl-carrier-protein] and UDP-N-acetyl-alpha-D-glucosamine: step 1/6. Involved in the biosynthesis of lipid A, a phosphorylated glycolipid that anchors the lipopolysaccharide to the outer membrane of the cell. This is Acyl-[acyl-carrier-protein]--UDP-N-acetylglucosamine O-acyltransferase from Neisseria meningitidis serogroup A / serotype 4A (strain DSM 15465 / Z2491).